We begin with the raw amino-acid sequence, 204 residues long: Large ribosomal subunit protein uL4 (204 aa).

Residues 53–77 (ISDVSGTTAKPYSQKRTGRARQGSL) are disordered. Residues 56–67 (VSGTTAKPYSQK) are compositionally biased toward polar residues.

This sequence belongs to the universal ribosomal protein uL4 family. In terms of assembly, part of the 50S ribosomal subunit.

Its function is as follows. One of the primary rRNA binding proteins, this protein initially binds near the 5'-end of the 23S rRNA. It is important during the early stages of 50S assembly. It makes multiple contacts with different domains of the 23S rRNA in the assembled 50S subunit and ribosome. Forms part of the polypeptide exit tunnel. The protein is Large ribosomal subunit protein uL4 of Wolbachia sp. subsp. Brugia malayi (strain TRS).